The following is a 149-amino-acid chain: Transcription antitermination protein NusB (149 aa).

It belongs to the NusB family.

Its function is as follows. Involved in transcription antitermination. Required for transcription of ribosomal RNA (rRNA) genes. Binds specifically to the boxA antiterminator sequence of the ribosomal RNA (rrn) operons. The sequence is that of Transcription antitermination protein NusB from Hahella chejuensis (strain KCTC 2396).